The primary structure comprises 169 residues: Secreted RxLR effector protein BLN03 (169 aa).

A signal peptide spans methionine 1 to alanine 21. The dEER signature appears at threonine 51–arginine 54. The helical transmembrane segment at glycine 149 to valine 169 threads the bilayer.

It belongs to the RxLR effector family. In terms of assembly, interacts with host transcription factor NAC069.

Its subcellular location is the secreted. The protein localises to the host membrane. Secreted effector that inhibits stress-induced relocalization of the endoplasmic reticulum tail-anchored transcription factors to the nucleus, thus affecting stress responses. The polypeptide is Secreted RxLR effector protein BLN03 (Bremia lactucae (Lettuce downy mildew)).